Consider the following 24-residue polypeptide: Humanin-like 10 (24 aa).

Belongs to the humanin family. In terms of tissue distribution, expressed in mature brain, thyroid gland and testis.

It localises to the secreted. The protein localises to the cytoplasm. Plays a role as a neuroprotective and antiapoptotic factor. The protein is Humanin-like 10 of Homo sapiens (Human).